Reading from the N-terminus, the 282-residue chain is Bis(5'-nucleosyl)-tetraphosphatase, symmetrical (282 aa).

The protein belongs to the Ap4A hydrolase family.

It carries out the reaction P(1),P(4)-bis(5'-adenosyl) tetraphosphate + H2O = 2 ADP + 2 H(+). Functionally, hydrolyzes diadenosine 5',5'''-P1,P4-tetraphosphate to yield ADP. This Citrobacter koseri (strain ATCC BAA-895 / CDC 4225-83 / SGSC4696) protein is Bis(5'-nucleosyl)-tetraphosphatase, symmetrical.